The sequence spans 146 residues: MLRNASAQILKQFVRHRTTDASLTLEKSINKVQILGRVGQDPVMRQVEGRNPVTIFSMATNEMWRSGEGEPVGAGDVTQKTTWHRISVFKPGLRDVAYQYVKKGSRIFVEGKLDYGEYVDKNNVRRQATTIIADNIVFLSENLRDQ.

Residues 1–16 (MLRNASAQILKQFVRH) constitute a mitochondrion transit peptide. The region spanning 29 to 140 (INKVQILGRV…IIADNIVFLS (112 aa)) is the SSB domain.

Its subcellular location is the mitochondrion. The protein resides in the mitochondrion matrix. It is found in the mitochondrion nucleoid. Binds preferentially and cooperatively to pyrimidine rich single-stranded DNA (ss-DNA). May be required to maintain the copy number of mitochondrial DNA (mtDNA) and play a crucial role during mtDNA replication. Required for retinal ganglion cell differentiation and retinal integrity. The sequence is that of Single-stranded DNA-binding protein, mitochondrial from Danio rerio (Zebrafish).